The primary structure comprises 118 residues: Small ribosomal subunit protein eS24 (118 aa).

This sequence belongs to the eukaryotic ribosomal protein eS24 family.

This chain is Small ribosomal subunit protein eS24, found in Sulfolobus acidocaldarius (strain ATCC 33909 / DSM 639 / JCM 8929 / NBRC 15157 / NCIMB 11770).